The following is a 262-amino-acid chain: GDT1-like protein C186.05c (262 aa).

A run of 5 helical transmembrane segments spans residues 31-51 (ISMIIGCELGDKSFIVTALLA), 57-77 (ASVFFGSYLALFFMTSFAVLV), 83-103 (FLFPKSITHILGGTLFLIFGV), 208-228 (VLDVFIGVNIGHMLCTMVAVI), and 242-262 (VLFFGGIVFMIFGILYIFQGF).

The protein belongs to the GDT1 family.

Its subcellular location is the endoplasmic reticulum membrane. The chain is GDT1-like protein C186.05c from Schizosaccharomyces pombe (strain 972 / ATCC 24843) (Fission yeast).